We begin with the raw amino-acid sequence, 618 residues long: Dihydroxy-acid dehydratase 1 (618 aa).

Aspartate 81 is a Mg(2+) binding site. Cysteine 122 is a binding site for [2Fe-2S] cluster. Mg(2+)-binding residues include aspartate 123 and lysine 124. Lysine 124 is subject to N6-carboxylysine. Cysteine 195 is a binding site for [2Fe-2S] cluster. A Mg(2+)-binding site is contributed by glutamate 491. Serine 517 serves as the catalytic Proton acceptor.

This sequence belongs to the IlvD/Edd family. Homodimer. [2Fe-2S] cluster is required as a cofactor. Mg(2+) serves as cofactor.

It catalyses the reaction (2R)-2,3-dihydroxy-3-methylbutanoate = 3-methyl-2-oxobutanoate + H2O. The catalysed reaction is (2R,3R)-2,3-dihydroxy-3-methylpentanoate = (S)-3-methyl-2-oxopentanoate + H2O. The protein operates within amino-acid biosynthesis; L-isoleucine biosynthesis; L-isoleucine from 2-oxobutanoate: step 3/4. It functions in the pathway amino-acid biosynthesis; L-valine biosynthesis; L-valine from pyruvate: step 3/4. Functions in the biosynthesis of branched-chain amino acids. Catalyzes the dehydration of (2R,3R)-2,3-dihydroxy-3-methylpentanoate (2,3-dihydroxy-3-methylvalerate) into 2-oxo-3-methylpentanoate (2-oxo-3-methylvalerate) and of (2R)-2,3-dihydroxy-3-methylbutanoate (2,3-dihydroxyisovalerate) into 2-oxo-3-methylbutanoate (2-oxoisovalerate), the penultimate precursor to L-isoleucine and L-valine, respectively. This is Dihydroxy-acid dehydratase 1 from Pseudoalteromonas translucida (strain TAC 125).